A 678-amino-acid chain; its full sequence is Transcriptional regulator CRZ1 (678 aa).

A compositionally biased stretch (polar residues) spans 1 to 21 (MSFSNGNMASYMTSSNGEEQS). Disordered regions lie at residues 1-50 (MSFS…SHTF) and 159-195 (TPADNQHRPSLTNQFLSPRSNYDGTTRSSGIDSNYSD). Positions 34-47 (YRRNNFRNSSNSGS) are enriched in low complexity. The segment covering 166-195 (RPSLTNQFLSPRSNYDGTTRSSGIDSNYSD) has biased composition (polar residues). Thr170 carries the phosphothreonine modification. Phosphoserine occurs at positions 175, 245, and 385. The disordered stretch occupies residues 401–486 (KLKKSRRRSS…SNFNEDNNNN (86 aa)). The segment covering 410–428 (SQTSNNSFTSRRSSRSRSI) has biased composition (low complexity). Basic and acidic residues-rich tracts occupy residues 429–446 (SPDEKAKSISANREKLLE) and 457–467 (DNNRERYDNDS). Over residues 472–486 (NTINSSNFNEDNNNN) the composition is skewed to low complexity. 2 consecutive C2H2-type zinc fingers follow at residues 569–591 (FACDVCGKKFTRPYNLKSHLRTH) and 597–619 (FICSICGKAFARQHDRKRHEDLH).

In terms of processing, phosphorylated. Dephosphorylated by calcineurin which leads to rapid translocation from the cytoplasm to the nucleus. Phosphorylated by the cyclin-CDK PHO80-PHO85.

The protein resides in the nucleus. It localises to the cytoplasm. Functionally, involved in the regulation of calcium ion homeostasis. Binds to the calcineurin-dependent response element. Transcriptionally regulates PMC1, PMR1, PMR2A and FKS2. In Saccharomyces cerevisiae (strain ATCC 204508 / S288c) (Baker's yeast), this protein is Transcriptional regulator CRZ1 (CRZ1).